Consider the following 194-residue polypeptide: Putative manganese efflux pump MntP (194 aa).

6 helical membrane-spanning segments follow: residues P3 to G23, L37 to L57, I65 to I85, L112 to F132, I139 to G159, and A170 to L190.

It belongs to the MntP (TC 9.B.29) family.

It is found in the cell inner membrane. Its function is as follows. Probably functions as a manganese efflux pump. The protein is Putative manganese efflux pump MntP of Xylella fastidiosa (strain 9a5c).